The primary structure comprises 746 residues: Polyribonucleotide nucleotidyltransferase (746 aa).

Residues Asp515 and Asp521 each contribute to the Mg(2+) site. The region spanning 581–640 is the KH domain; sequence PRVIAVKIPVDKIGEVIGPKGKMINQIQEDTGADISIEDDGTVYIGATNGPSADAARSAI. The 73-residue stretch at 652–724 folds into the S1 motif domain; the sequence is GERYLGTVVK…DRGKLSLSPV (73 aa).

This sequence belongs to the polyribonucleotide nucleotidyltransferase family. The cofactor is Mg(2+).

Its subcellular location is the cytoplasm. The enzyme catalyses RNA(n+1) + phosphate = RNA(n) + a ribonucleoside 5'-diphosphate. Functionally, involved in mRNA degradation. Catalyzes the phosphorolysis of single-stranded polyribonucleotides processively in the 3'- to 5'-direction. The polypeptide is Polyribonucleotide nucleotidyltransferase (Renibacterium salmoninarum (strain ATCC 33209 / DSM 20767 / JCM 11484 / NBRC 15589 / NCIMB 2235)).